A 265-amino-acid polypeptide reads, in one-letter code: tRNA pseudouridine synthase A (265 aa).

The active-site Nucleophile is Asp55. Tyr113 contacts substrate.

This sequence belongs to the tRNA pseudouridine synthase TruA family. In terms of assembly, homodimer.

It carries out the reaction uridine(38/39/40) in tRNA = pseudouridine(38/39/40) in tRNA. Its function is as follows. Formation of pseudouridine at positions 38, 39 and 40 in the anticodon stem and loop of transfer RNAs. The protein is tRNA pseudouridine synthase A of Levilactobacillus brevis (strain ATCC 367 / BCRC 12310 / CIP 105137 / JCM 1170 / LMG 11437 / NCIMB 947 / NCTC 947) (Lactobacillus brevis).